The chain runs to 229 residues: MIIGVIGAMEQEVMLLSKQLAKLNIWQQARCNIYSGWLHGKKVVLVQSGIGKVSAALGCTLLLTNFEATLVINIGSAGGLSPALAVGDIIVSEEVQYHDVNVTAFGYDKGQMAQYPLLFPASPSLVALTKQLTEHTNINVVCGQIISGDIFINGGQELYKLKRRFPQAIAVDMEVTAIAQICYLFAVPFVGIRVITDIADSVSHKSFKDNLITVVSHLSLLVSDIIQAL.

Glutamate 12 serves as the catalytic Proton acceptor. Residues glycine 78, isoleucine 152, and 173-174 (ME) contribute to the substrate site. The active-site Proton donor is the aspartate 197.

This sequence belongs to the PNP/UDP phosphorylase family. MtnN subfamily.

The catalysed reaction is S-adenosyl-L-homocysteine + H2O = S-(5-deoxy-D-ribos-5-yl)-L-homocysteine + adenine. The enzyme catalyses S-methyl-5'-thioadenosine + H2O = 5-(methylsulfanyl)-D-ribose + adenine. It catalyses the reaction 5'-deoxyadenosine + H2O = 5-deoxy-D-ribose + adenine. The protein operates within amino-acid biosynthesis; L-methionine biosynthesis via salvage pathway; S-methyl-5-thio-alpha-D-ribose 1-phosphate from S-methyl-5'-thioadenosine (hydrolase route): step 1/2. Functionally, catalyzes the irreversible cleavage of the glycosidic bond in both 5'-methylthioadenosine (MTA) and S-adenosylhomocysteine (SAH/AdoHcy) to adenine and the corresponding thioribose, 5'-methylthioribose and S-ribosylhomocysteine, respectively. Also cleaves 5'-deoxyadenosine, a toxic by-product of radical S-adenosylmethionine (SAM) enzymes, into 5-deoxyribose and adenine. This is 5'-methylthioadenosine/S-adenosylhomocysteine nucleosidase from Baumannia cicadellinicola subsp. Homalodisca coagulata.